Consider the following 350-residue polypeptide: Cytochrome c biogenesis protein CcsA (350 aa).

8 helical membrane passes run 23–43 (NVAFAISLGAMLFYWGGAAFP), 47–67 (LLAELGLAGMIGANLTMAALL), 82–102 (LYESLFFLAWGITALHLLALH), 108–128 (WVGVMTAPVVTGIVAFAALVL), 153–173 (VMLLAYAALLVGSLLSISFLI), 258–278 (LIGLGFPLLTIGIIAGAVWAN), 293–313 (WALITWLVFAAYLHARITKGW), and 319–339 (ALLASLGFGVVWVCYLGVNFL).

It belongs to the CcmF/CycK/Ccl1/NrfE/CcsA family. As to quaternary structure, may interact with ccs1.

It is found in the cellular thylakoid membrane. In terms of biological role, required during biogenesis of c-type cytochromes (cytochrome c6 and cytochrome f) at the step of heme attachment. The polypeptide is Cytochrome c biogenesis protein CcsA (Synechococcus sp. (strain JA-2-3B'a(2-13)) (Cyanobacteria bacterium Yellowstone B-Prime)).